Reading from the N-terminus, the 607-residue chain is Thymidine kinase (607 aa).

Disordered stretches follow at residues 1 to 160 (MAGF…ADST) and 180 to 215 (DDKS…PSGL). The span at 17–32 (KCQEDESPENERHENF) shows a compositional bias: basic and acidic residues. Polar residues-rich tracts occupy residues 88 to 106 (AAVT…TSCP), 148 to 160 (RKTS…ADST), and 194 to 203 (RRPSSHSALK). 291 to 298 (GAPGVGKT) is an ATP binding site. The active-site Proton acceptor is the Glu-317. Substrate is bound at residue Gln-355. Arg-445 lines the ATP pocket. Arg-451 lines the substrate pocket.

Belongs to the herpesviridae thymidine kinase family. Homodimer.

It localises to the virion tegument. The protein localises to the host nucleus. The catalysed reaction is thymidine + ATP = dTMP + ADP + H(+). In terms of biological role, catalyzes the transfer of the gamma-phospho group of ATP to thymidine to generate dTMP in the salvage pathway of pyrimidine synthesis. The dTMP serves as a substrate for DNA polymerase during viral DNA replication. Allows the virus to be reactivated and to grow in non-proliferative cells lacking a high concentration of phosphorylated nucleic acid precursors. This Epstein-Barr virus (strain GD1) (HHV-4) protein is Thymidine kinase.